We begin with the raw amino-acid sequence, 136 residues long: Protein NrdI (136 aa).

This sequence belongs to the NrdI family.

In terms of biological role, probably involved in ribonucleotide reductase function. The polypeptide is Protein NrdI (Salmonella agona (strain SL483)).